A 135-amino-acid polypeptide reads, in one-letter code: Small ribosomal subunit protein uS9 (135 aa).

Positions 108–118 are enriched in basic and acidic residues; the sequence is VGDPRRTEPHK. The tract at residues 108–135 is disordered; that stretch reads VGDPRRTEPHKPNRSTKGPRAKRQKSYR. The span at 119–135 shows a compositional bias: basic residues; that stretch reads PNRSTKGPRAKRQKSYR.

It belongs to the universal ribosomal protein uS9 family.

The polypeptide is Small ribosomal subunit protein uS9 (rps9) (Pyrococcus abyssi (strain GE5 / Orsay)).